The primary structure comprises 355 residues: Protein-glutamate methylesterase/protein-glutamine glutaminase (355 aa).

Residues 4–121 (KVLIIDDSAL…ANGMHEYSEM (118 aa)) form the Response regulatory domain. Aspartate 55 is modified (4-aspartylphosphate). The region spanning 156–348 (LISSEKLIII…GRVLQYLAAN (193 aa)) is the CheB-type methylesterase domain. Active-site residues include serine 168, histidine 194, and aspartate 290.

The protein belongs to the CheB family. Post-translationally, phosphorylated by CheA. Phosphorylation of the N-terminal regulatory domain activates the methylesterase activity.

It is found in the cytoplasm. The enzyme catalyses [protein]-L-glutamate 5-O-methyl ester + H2O = L-glutamyl-[protein] + methanol + H(+). It catalyses the reaction L-glutaminyl-[protein] + H2O = L-glutamyl-[protein] + NH4(+). Its function is as follows. Involved in chemotaxis. Part of a chemotaxis signal transduction system that modulates chemotaxis in response to various stimuli. Catalyzes the demethylation of specific methylglutamate residues introduced into the chemoreceptors (methyl-accepting chemotaxis proteins or MCP) by CheR. Also mediates the irreversible deamidation of specific glutamine residues to glutamic acid. This is Protein-glutamate methylesterase/protein-glutamine glutaminase from Methylobacillus flagellatus (strain ATCC 51484 / DSM 6875 / VKM B-1610 / KT).